Reading from the N-terminus, the 190-residue chain is (S)-2-hydroxypropylphosphonic acid epoxidase (190 aa).

The HTH cro/C1-type domain maps to K10–F60. Residues R20 to D40 constitute a DNA-binding region (H-T-H motif). Residues R87, Y95, N125–H128, and E132 each bind substrate. Fe cation contacts are provided by H128, E132, and H171. Positions H128–H176 constitute a Cupin type-2 domain.

Belongs to the non-heme iron-dependent dioxygenase family. As to quaternary structure, homotrimer. It depends on Fe(2+) as a cofactor.

The catalysed reaction is (S)-2-hydroxypropylphosphonate + H2O2 = (1R,2S)-epoxypropylphosphonate + 2 H2O. It functions in the pathway antibiotic biosynthesis; fosfomycin biosynthesis. Functionally, non-heme-dependent dioxygenase that catalyzes the oxidative epoxidation of (S)-2-hydroxypropylphosphonate into (1R,2S)-epoxypropylphosphonate, the final step in the biosynthesis of fosfomycin antibiotic. The polypeptide is (S)-2-hydroxypropylphosphonic acid epoxidase (hppE) (Pseudomonas syringae).